A 469-amino-acid chain; its full sequence is Cysteine--tRNA ligase (469 aa).

Cysteine 29 serves as a coordination point for Zn(2+). The short motif at 31-41 (PTVYNYIHIGN) is the 'HIGH' region element. Zn(2+) contacts are provided by cysteine 210, histidine 235, and glutamate 239. Residues 267–271 (KMSKS) carry the 'KMSKS' region motif. Residue lysine 270 coordinates ATP.

This sequence belongs to the class-I aminoacyl-tRNA synthetase family. In terms of assembly, monomer. The cofactor is Zn(2+).

The protein localises to the cytoplasm. The catalysed reaction is tRNA(Cys) + L-cysteine + ATP = L-cysteinyl-tRNA(Cys) + AMP + diphosphate. This chain is Cysteine--tRNA ligase, found in Thermosipho africanus (strain TCF52B).